The sequence spans 274 residues: Pyrroline-5-carboxylate reductase 3 (274 aa).

Alanine 2 carries the post-translational modification N-acetylalanine.

Belongs to the pyrroline-5-carboxylate reductase family. Homodecamer; composed of 5 homodimers.

The protein resides in the cytoplasm. The catalysed reaction is L-proline + NADP(+) = (S)-1-pyrroline-5-carboxylate + NADPH + 2 H(+). It carries out the reaction L-proline + NAD(+) = (S)-1-pyrroline-5-carboxylate + NADH + 2 H(+). The protein operates within amino-acid biosynthesis; L-proline biosynthesis; L-proline from L-glutamate 5-semialdehyde: step 1/1. Functionally, oxidoreductase that catalyzes the last step in proline biosynthesis, which corresponds to the reduction of pyrroline-5-carboxylate (P5C) to L-proline using NAD(P)H. Proline is synthesized from either glutamate or ornithine; both are converted to P5C, and then to proline via pyrroline-5-carboxylate reductases (PYCRs). PYCR3 is exclusively linked to the biosynthesis of proline from ornithine. The chain is Pyrroline-5-carboxylate reductase 3 from Mus musculus (Mouse).